The chain runs to 368 residues: Phospho-N-acetylmuramoyl-pentapeptide-transferase (368 aa).

The next 10 helical transmembrane spans lie at 34–54 (GAVVTGALFVFLFGPWIIDHL), 79–99 (TPTMGGLMILSGLVVSTVLWA), 102–122 (LNPYVWIVLAVTLGFGFVGFY), 140–160 (ARILIEAGIALVACYALVRLG), 176–196 (LVIKFGWMYVIFGAFVIVGAG), 207–227 (GLAIVPVMIASASFGLIAYLA), 247–267 (LAVLCGAVLGAGLGFLWFNAP), 271–291 (IFMGDTGSLALGGMLGSIAVA), 296–316 (IVLAVIGGLFVLEAVSVIVQV), and 345–365 (QIVIRFWIISVMLALVGLSTL).

The protein belongs to the glycosyltransferase 4 family. MraY subfamily. It depends on Mg(2+) as a cofactor.

The protein localises to the cell inner membrane. The enzyme catalyses UDP-N-acetyl-alpha-D-muramoyl-L-alanyl-gamma-D-glutamyl-meso-2,6-diaminopimeloyl-D-alanyl-D-alanine + di-trans,octa-cis-undecaprenyl phosphate = di-trans,octa-cis-undecaprenyl diphospho-N-acetyl-alpha-D-muramoyl-L-alanyl-D-glutamyl-meso-2,6-diaminopimeloyl-D-alanyl-D-alanine + UMP. It functions in the pathway cell wall biogenesis; peptidoglycan biosynthesis. Catalyzes the initial step of the lipid cycle reactions in the biosynthesis of the cell wall peptidoglycan: transfers peptidoglycan precursor phospho-MurNAc-pentapeptide from UDP-MurNAc-pentapeptide onto the lipid carrier undecaprenyl phosphate, yielding undecaprenyl-pyrophosphoryl-MurNAc-pentapeptide, known as lipid I. This chain is Phospho-N-acetylmuramoyl-pentapeptide-transferase, found in Bradyrhizobium sp. (strain BTAi1 / ATCC BAA-1182).